Reading from the N-terminus, the 298-residue chain is Protoheme IX farnesyltransferase (298 aa).

The next 9 membrane-spanning stretches (helical) occupy residues 23-43 (LLLLFTMYTAYIVGGGLGKPY), 47-67 (LVVLTLGFITIAAVTALNMYF), 93-113 (VFIATVAATIVSVILAWRIIN), 115-135 (HFALAIVIGFLFDIVAYTYLL), 143-163 (IIAGAVAGGAPALGGWAAAAG), 169-189 (ALLFSLIVATWVPSHIWFLAT), 211-231 (IAVASGIGLGSLVMGYSIVGL), 236-256 (VIGTVSLIVGVIAAIAIFHLA), and 278-298 (MMLGLVFLVMMLEKVVSYIIS).

It belongs to the UbiA prenyltransferase family. Protoheme IX farnesyltransferase subfamily.

The protein localises to the cell membrane. The enzyme catalyses heme b + (2E,6E)-farnesyl diphosphate + H2O = Fe(II)-heme o + diphosphate. It functions in the pathway porphyrin-containing compound metabolism; heme O biosynthesis; heme O from protoheme: step 1/1. Its function is as follows. Converts heme B (protoheme IX) to heme O by substitution of the vinyl group on carbon 2 of heme B porphyrin ring with a hydroxyethyl farnesyl side group. The polypeptide is Protoheme IX farnesyltransferase (Hyperthermus butylicus (strain DSM 5456 / JCM 9403 / PLM1-5)).